We begin with the raw amino-acid sequence, 49 residues long: Large ribosomal subunit protein bL33 (49 aa).

The protein belongs to the bacterial ribosomal protein bL33 family.

This chain is Large ribosomal subunit protein bL33, found in Thermosipho melanesiensis (strain DSM 12029 / CIP 104789 / BI429).